A 157-amino-acid polypeptide reads, in one-letter code: Urease accessory protein UreE (157 aa).

This sequence belongs to the UreE family.

The protein resides in the cytoplasm. Its function is as follows. Involved in urease metallocenter assembly. Binds nickel. Probably functions as a nickel donor during metallocenter assembly. The chain is Urease accessory protein UreE from Paenarthrobacter aurescens (strain TC1).